Reading from the N-terminus, the 366-residue chain is Chorismate synthase (366 aa).

NADP(+) is bound by residues R48 and R54. FMN is bound by residues 125-127, 238-239, G278, 293-297, and R319; these read RSS, NA, and KPTSS.

The protein belongs to the chorismate synthase family. As to quaternary structure, homotetramer. The cofactor is FMNH2.

The catalysed reaction is 5-O-(1-carboxyvinyl)-3-phosphoshikimate = chorismate + phosphate. Its pathway is metabolic intermediate biosynthesis; chorismate biosynthesis; chorismate from D-erythrose 4-phosphate and phosphoenolpyruvate: step 7/7. In terms of biological role, catalyzes the anti-1,4-elimination of the C-3 phosphate and the C-6 proR hydrogen from 5-enolpyruvylshikimate-3-phosphate (EPSP) to yield chorismate, which is the branch point compound that serves as the starting substrate for the three terminal pathways of aromatic amino acid biosynthesis. This reaction introduces a second double bond into the aromatic ring system. The chain is Chorismate synthase from Burkholderia ambifaria (strain ATCC BAA-244 / DSM 16087 / CCUG 44356 / LMG 19182 / AMMD) (Burkholderia cepacia (strain AMMD)).